The chain runs to 306 residues: MTSTRHDGDTWDLASSVGATATMAAVARAIATRADRRLIDDPFAAPLVRAVGIDLLTRLATGDVPPDGLVEQVAIDVAKVRARFYDEFFLEATNTGITQVVILASGLDSRAYRLPWPIGTVVYELDQPRVVEFKTRTLAALGAVPTADRRVAAVDLRDDWPAALRAAGFDPARPTAWSAEGLLGYLPPEAQDRLLDTVTELSAPESRVATENRPNPKPGDEDRTKEALNRISERWRAHSFDPDMARLRYYGERNETAPYLADRGWALTGISVRDLLAAHGLPPLRDDDLRMGDVRYVSGVRNKTTK.

Residues aspartate 126 and 155 to 156 each bind S-adenosyl-L-methionine; that span reads DL. Residues 201-225 form a disordered region; it reads LSAPESRVATENRPNPKPGDEDRTK.

Belongs to the UPF0677 family.

In terms of biological role, exhibits S-adenosyl-L-methionine-dependent methyltransferase activity. In Frankia alni (strain DSM 45986 / CECT 9034 / ACN14a), this protein is Putative S-adenosyl-L-methionine-dependent methyltransferase FRAAL5401.